We begin with the raw amino-acid sequence, 251 residues long: Small ribosomal subunit protein uS2 (251 aa).

Positions 232 to 251 (LQTGEEEMAAAEGESEQVEA) are disordered. A compositionally biased stretch (acidic residues) spans 235–251 (GEEEMAAAEGESEQVEA).

It belongs to the universal ribosomal protein uS2 family.

The polypeptide is Small ribosomal subunit protein uS2 (Geobacter metallireducens (strain ATCC 53774 / DSM 7210 / GS-15)).